The primary structure comprises 468 residues: MSSGKIAQVVGPVVDVAFATGDKLPEINNALVVYTDEEKSRRIVLEVALELGEGVVRTIAMESTDGLTRGLEVLDTGRPISVPVGKETLGRVFNVLGDTIDMEAPFADDAEREPIHKKAPTFDELSTSTEILETGIKVIDLLAPYLKGGKVGLFGGAGVGKTVLIQELIHNIAQEHGGISVFTGVGERSREGNDLYWEMKESGVIEKTAMVFGQMNEPPGARMRVALTGLTIAEYFRDVEGQDVLLFIDNIFRFTQAGSEVSALLGRMPSAVGYQPTLATEMGQLQERITSTKKGSVTSIQAIYVPADDYTDPAPATAFAHLDSTTNLERKLTQMGIYPAVDPLASSSRALSPEIVGEEHYAVATEVQRVLQRYRELQDIIAILGMDELSDEDKTLVGRARRIQFFLSQNFNVAEQFTGQPGSYVPVAETVRGFKEILEGKYDNLPEDAFRSVGPIEDVVAKAKAMGY.

Residue 155–162 (GGAGVGKT) coordinates ATP.

It belongs to the ATPase alpha/beta chains family. In terms of assembly, F-type ATPases have 2 components, CF(1) - the catalytic core - and CF(0) - the membrane proton channel. CF(1) has five subunits: alpha(3), beta(3), gamma(1), delta(1), epsilon(1). CF(0) has three main subunits: a(1), b(2) and c(9-12). The alpha and beta chains form an alternating ring which encloses part of the gamma chain. CF(1) is attached to CF(0) by a central stalk formed by the gamma and epsilon chains, while a peripheral stalk is formed by the delta and b chains.

Its subcellular location is the cell membrane. It catalyses the reaction ATP + H2O + 4 H(+)(in) = ADP + phosphate + 5 H(+)(out). In terms of biological role, produces ATP from ADP in the presence of a proton gradient across the membrane. The catalytic sites are hosted primarily by the beta subunits. This is ATP synthase subunit beta from Streptococcus thermophilus (strain CNRZ 1066).